A 446-amino-acid chain; its full sequence is MGRAYSTIAFDPAKCDGCGDCMTACAQAKTGTDDIARSRIQIYGREGAADKTFELALCRQCADPKCVTVCPAGALNKDGTSGVIGWDATKCVDCLLCTVGCAYAGIALDEATGHVAKCDTCDGNPACVPACPHGALKHITTANIYNEVGDWEDLFAPGLAGCQGCNTELLMRHTLRRVGPDTVLATPPGCVPGMGSVGFNGTTGTKVPVFHPLLTNTAAMLAGIKRQYKRVGRDVQALAIAGDGGASDVGFQSLSGRAERGEQMLFMVVDNEGYMNTGMQRSSCTPYGAWTSTTPVGETSRGKTQDAKNLPLIMVNHRCAYVATASTAYMEDLYDKLDKAIAASKNGFAYLHVYSPCTTAWRFPSNLNMEVARKAVETNFVMLWEYTPQDGLHFTKPVDDPLPVTDYLKAMGRFRHLTPEQVEHIQKKVVENQKFVERMTEHAHVG.

4 consecutive 4Fe-4S ferredoxin-type domains span residues 6–35 (STIA…TDDI), 49–80 (ADKT…KDGT), 82–111 (GVIG…LDEA), and 109–141 (DEAT…HITT).

As to quaternary structure, dimer of heteropentamers composed of an alpha (PadG), a beta (PadI), a gamma (PadE), a delta (PadF) and an epsilon (PadH) subunit. The cofactor is [4Fe-4S] cluster.

The catalysed reaction is phenylglyoxylate + NAD(+) + CoA = benzoyl-CoA + CO2 + NADH. With respect to regulation, activated by magnesium ions and thiamine diphosphate. In terms of biological role, involved in the anaerobic metabolism of phenylalanine and phenylacetate. Catalyzes the oxidative decarboxylation of phenylglyoxylate to benzoyl-CoA and CO(2). It can also react slowly with 2-oxo-3-methylbutanoate and use different electron acceptors such as benzyl viologen, methyl viologen, FAD or FMN, but NAD seems to be the physiological electron acceptor. Also catalyzes an isotope exchange between CO(2) and the carboxyl group which proves partial or complete reversibility of the oxidative decarboxylation reaction. This Aromatoleum evansii (Azoarcus evansii) protein is NADH-dependent phenylglyoxylate dehydrogenase subunit beta (padI).